A 259-amino-acid chain; its full sequence is Phospholipase YtpA (259 aa).

Serine 88 (nucleophile) is an active-site residue. Residues aspartate 206 and histidine 236 each act as charge relay system in the active site.

Belongs to the AB hydrolase superfamily.

The protein operates within antibiotic biosynthesis; bacilysocin biosynthesis. In terms of biological role, phospholipase involved in the biosynthesis of the antibiotic bacilysocin. It probably catalyzes the hydrolysis of the 2-sn-acyl moiety of phosphatidylglycerol to produce bacilysocin (lysophosphatidylglycerol). Is also able to catalyze the hydrolysis reaction of one acyl bond in phosphatidylcholine in vitro (actual cleavage point is unknown), resulting in lysophosphatidylcholine. This Bacillus subtilis (strain 168) protein is Phospholipase YtpA (ytpA).